A 461-amino-acid chain; its full sequence is Cysteine--tRNA ligase (461 aa).

Cys-28 is a binding site for Zn(2+). A 'HIGH' region motif is present at residues 30–40 (ITVYDLCHIGH). Cys-209, His-234, and Glu-238 together coordinate Zn(2+). The 'KMSKS' region signature appears at 266–270 (KMSKS). Residue Lys-269 participates in ATP binding.

This sequence belongs to the class-I aminoacyl-tRNA synthetase family. In terms of assembly, monomer. The cofactor is Zn(2+).

It is found in the cytoplasm. The enzyme catalyses tRNA(Cys) + L-cysteine + ATP = L-cysteinyl-tRNA(Cys) + AMP + diphosphate. This Escherichia coli O17:K52:H18 (strain UMN026 / ExPEC) protein is Cysteine--tRNA ligase.